Consider the following 331-residue polypeptide: DSC E3 ubiquitin ligase complex subunit D (331 aa).

A glycan (N-linked (GlcNAc...) asparagine) is linked at N26. 3 helical membrane-spanning segments follow: residues 63-83 (ILIY…ILFA), 107-127 (PFIG…NFFT), and 159-179 (LFLL…LIVE). Residues 188-225 (STTSTEILRVQDHDSEERGVHRTRPESRSSVVGAELDE) are disordered. Basic and acidic residues predominate over residues 196–214 (RVQDHDSEERGVHRTRPES).

Component of the DSC E3 ubiquitin ligase complex composed of dscA, dscB, dscC and dscD.

The protein localises to the endoplasmic reticulum membrane. It participates in protein modification; protein ubiquitination. In terms of biological role, component of the DSC E3 ubiquitin ligase complex which is required for the srbA transcriptional activator proteolytic cleavage to release the soluble transcription factor from the membrane in low oxygen or sterol conditions. Required for growth during hypoxia and triazole drug susceptibility, as well as for virulence in a murine model of invasive pulmonary aspergillosis (IPA). The protein is DSC E3 ubiquitin ligase complex subunit D of Aspergillus fumigatus (strain ATCC MYA-4609 / CBS 101355 / FGSC A1100 / Af293) (Neosartorya fumigata).